A 305-amino-acid chain; its full sequence is GTPase Era (305 aa).

In terms of domain architecture, Era-type G spans 11 to 181; the sequence is RSGFVSFVGR…IKVMTDLLPE (171 aa). Positions 19–26 are G1; that stretch reads GRPNTGKS. A GTP-binding site is contributed by 19–26; that stretch reads GRPNTGKS. Residues 45–49 are G2; sequence ETTRH. The G3 stretch occupies residues 66–69; the sequence is DTPG. Residues 66–70 and 130–133 contribute to the GTP site; these read DTPGL and TKAD. The tract at residues 130-133 is G4; sequence TKAD. The G5 stretch occupies residues 160 to 162; sequence VSS. A KH type-2 domain is found at 212-291; that stretch reads LKNELPHSVA…FLDLRIKVLK (80 aa).

This sequence belongs to the TRAFAC class TrmE-Era-EngA-EngB-Septin-like GTPase superfamily. Era GTPase family. In terms of assembly, monomer.

The protein localises to the cytoplasm. It localises to the cell membrane. An essential GTPase that binds both GDP and GTP, with rapid nucleotide exchange. Plays a role in 16S rRNA processing and 30S ribosomal subunit biogenesis and possibly also in cell cycle regulation and energy metabolism. In Corynebacterium glutamicum (strain ATCC 13032 / DSM 20300 / JCM 1318 / BCRC 11384 / CCUG 27702 / LMG 3730 / NBRC 12168 / NCIMB 10025 / NRRL B-2784 / 534), this protein is GTPase Era.